Reading from the N-terminus, the 257-residue chain is Protein orai-2 (257 aa).

Helical transmembrane passes span 62-79, 94-114, 156-176, and 201-221; these read ASSR…VAMV, LIAF…ALLI, LGIL…FLPI, and LVST…TIHF.

The protein belongs to the Orai family.

It localises to the membrane. In terms of biological role, ca(2+) release-activated Ca(2+)-like (CRAC-like) channel subunit which mediates Ca(2+) influx and increase in Ca(2+)-selective current by synergy with the Ca(2+) sensor, stim1. In Xenopus laevis (African clawed frog), this protein is Protein orai-2 (orai2).